The following is a 504-amino-acid chain: ATP synthase subunit alpha, chloroplastic (504 aa).

170–177 is an ATP binding site; that stretch reads GDRQTGKT.

The protein belongs to the ATPase alpha/beta chains family. As to quaternary structure, F-type ATPases have 2 components, CF(1) - the catalytic core - and CF(0) - the membrane proton channel. CF(1) has five subunits: alpha(3), beta(3), gamma(1), delta(1), epsilon(1). CF(0) has four main subunits: a, b, b' and c.

The protein resides in the plastid. Its subcellular location is the chloroplast thylakoid membrane. The enzyme catalyses ATP + H2O + 4 H(+)(in) = ADP + phosphate + 5 H(+)(out). Its function is as follows. Produces ATP from ADP in the presence of a proton gradient across the membrane. The alpha chain is a regulatory subunit. The protein is ATP synthase subunit alpha, chloroplastic of Jasminum nudiflorum (Winter jasmine).